The primary structure comprises 769 residues: Serine/threonine-protein kinase PLK4 (769 aa).

A Protein kinase domain is found at 10–263 (YEVYEILGKG…LDQVLQHPFM (254 aa)). ATP contacts are provided by residues 16 to 24 (LGKGGFASV) and K39. D134 acts as the Proton acceptor in catalysis. 3 disordered regions span residues 280–304 (SSDS…SSYG), 337–380 (PQQR…LDIP), and 592–651 (APLT…VLSS). A compositionally biased stretch (polar residues) spans 337–371 (PQQRPQSASHNKPTSDFFSGISNDPRTMAPSSPTK). Residues 374–491 (KKRLDIPPLN…ARFVQMVKAK (118 aa)) enclose the Cryptic POLO box 1 (CPB1) domain. Residues 492–595 (TPKITYYSEK…GRRPANAPLT (104 aa)) enclose the Cryptic POLO box 2 (CPB2) domain. Residues 605 to 648 (TKENQLYSNISSPNTPQTPHQMPSFAMSTASHTSAGNPLTQRPV) are compositionally biased toward polar residues. Residues 662-745 (AMKKCTIAGV…MPAILRELNA (84 aa)) form the POLO box domain.

It belongs to the protein kinase superfamily. Ser/Thr protein kinase family. CDC5/Polo subfamily. In terms of assembly, homodimer. Ubiquitinated; leading to its degradation by the proteasome.

It is found in the cytoplasm. The protein localises to the cytoskeleton. Its subcellular location is the microtubule organizing center. It localises to the centrosome. The protein resides in the centriole. It catalyses the reaction L-seryl-[protein] + ATP = O-phospho-L-seryl-[protein] + ADP + H(+). The catalysed reaction is L-threonyl-[protein] + ATP = O-phospho-L-threonyl-[protein] + ADP + H(+). Its function is as follows. Serine/threonine-protein kinase that plays a central role in centriole duplication. Able to trigger procentriole formation on the surface of the mother centriole cylinder, leading to the recruitment of centriole biogenesis proteins. When overexpressed, it is able to induce centrosome amplification through the simultaneous generation of multiple procentrioles adjoining each parental centriole during S phase. The polypeptide is Serine/threonine-protein kinase PLK4 (SAK) (Aedes aegypti (Yellowfever mosquito)).